The primary structure comprises 49 residues: Large ribosomal subunit protein bL33 (49 aa).

This sequence belongs to the bacterial ribosomal protein bL33 family.

In Alkaliphilus oremlandii (strain OhILAs) (Clostridium oremlandii (strain OhILAs)), this protein is Large ribosomal subunit protein bL33.